The following is a 115-amino-acid chain: Small ribosomal subunit protein bS6 (115 aa).

Belongs to the bacterial ribosomal protein bS6 family.

Functionally, binds together with bS18 to 16S ribosomal RNA. The chain is Small ribosomal subunit protein bS6 from Picosynechococcus sp. (strain ATCC 27264 / PCC 7002 / PR-6) (Agmenellum quadruplicatum).